Reading from the N-terminus, the 235-residue chain is Purine nucleoside phosphorylase DeoD-type (235 aa).

H4 contacts a purine D-ribonucleoside. Phosphate is bound by residues G20, R24, R43, and 87-90; that span reads RVGT. A purine D-ribonucleoside contacts are provided by residues 179–181 and 203–204; these read EME and SD. The active-site Proton donor is the D204.

It belongs to the PNP/UDP phosphorylase family. In terms of assembly, homohexamer; trimer of homodimers.

The enzyme catalyses a purine D-ribonucleoside + phosphate = a purine nucleobase + alpha-D-ribose 1-phosphate. The catalysed reaction is a purine 2'-deoxy-D-ribonucleoside + phosphate = a purine nucleobase + 2-deoxy-alpha-D-ribose 1-phosphate. Catalyzes the reversible phosphorolytic breakdown of the N-glycosidic bond in the beta-(deoxy)ribonucleoside molecules, with the formation of the corresponding free purine bases and pentose-1-phosphate. The sequence is that of Purine nucleoside phosphorylase DeoD-type from Exiguobacterium sibiricum (strain DSM 17290 / CCUG 55495 / CIP 109462 / JCM 13490 / 255-15).